The primary structure comprises 547 residues: Chaperonin GroEL (547 aa).

Residues 30-33 (TLGP), K51, 87-91 (DGTTT), G415, and D496 each bind ATP. The segment at 528 to 547 (KEGAAPAGGMPDMGGMGGMM) is disordered. A compositionally biased stretch (gly residues) spans 538-547 (PDMGGMGGMM).

The protein belongs to the chaperonin (HSP60) family. In terms of assembly, forms a cylinder of 14 subunits composed of two heptameric rings stacked back-to-back. Interacts with the co-chaperonin GroES.

It is found in the cytoplasm. It carries out the reaction ATP + H2O + a folded polypeptide = ADP + phosphate + an unfolded polypeptide.. Its function is as follows. Together with its co-chaperonin GroES, plays an essential role in assisting protein folding. The GroEL-GroES system forms a nano-cage that allows encapsulation of the non-native substrate proteins and provides a physical environment optimized to promote and accelerate protein folding. In Ruegeria sp. (strain TM1040) (Silicibacter sp.), this protein is Chaperonin GroEL.